The chain runs to 90 residues: Probable Fe(2+)-trafficking protein (90 aa).

Belongs to the Fe(2+)-trafficking protein family.

Could be a mediator in iron transactions between iron acquisition and iron-requiring processes, such as synthesis and/or repair of Fe-S clusters in biosynthetic enzymes. The sequence is that of Probable Fe(2+)-trafficking protein from Aliivibrio salmonicida (strain LFI1238) (Vibrio salmonicida (strain LFI1238)).